We begin with the raw amino-acid sequence, 367 residues long: UDP-N-acetylenolpyruvoylglucosamine reductase 2 (367 aa).

The FAD-binding PCMH-type domain maps to 31-198 (IGGKPRSAVR…LAIELQLLTD (168 aa)). The active site involves Arg176. The active-site Proton donor is Ser256. Glu357 is an active-site residue.

The protein belongs to the MurB family. The cofactor is FAD.

Its subcellular location is the cytoplasm. It catalyses the reaction UDP-N-acetyl-alpha-D-muramate + NADP(+) = UDP-N-acetyl-3-O-(1-carboxyvinyl)-alpha-D-glucosamine + NADPH + H(+). The protein operates within cell wall biogenesis; peptidoglycan biosynthesis. Cell wall formation. This Corynebacterium glutamicum (strain ATCC 13032 / DSM 20300 / JCM 1318 / BCRC 11384 / CCUG 27702 / LMG 3730 / NBRC 12168 / NCIMB 10025 / NRRL B-2784 / 534) protein is UDP-N-acetylenolpyruvoylglucosamine reductase 2 (murB2).